The chain runs to 414 residues: Probable protein phosphatase 2C 80 (414 aa).

In terms of domain architecture, PPM-type phosphatase spans 174-411 (SCYLPHPEKE…DDITAVVSYV (238 aa)). Positions 204, 205, 336, and 402 each coordinate Mn(2+).

Belongs to the PP2C family. Requires Mg(2+) as cofactor. It depends on Mn(2+) as a cofactor.

It carries out the reaction O-phospho-L-seryl-[protein] + H2O = L-seryl-[protein] + phosphate. The catalysed reaction is O-phospho-L-threonyl-[protein] + H2O = L-threonyl-[protein] + phosphate. This is Probable protein phosphatase 2C 80 from Arabidopsis thaliana (Mouse-ear cress).